The following is a 115-amino-acid chain: U3-lycotoxin-Ls1u (115 aa).

Positions 1 to 20 are cleaved as a signal peptide; the sequence is MKFVLLFGVLLVTLFSYSSA. Residues 21 to 44 constitute a propeptide that is removed on maturation; that stretch reads EMLDDFDQADEDELLSLIEKEEAR. Cystine bridges form between cysteine 48/cysteine 63, cysteine 55/cysteine 72, and cysteine 62/cysteine 87.

It belongs to the neurotoxin 19 (CSTX) family. 01 subfamily. As to expression, expressed by the venom gland.

The protein localises to the secreted. The chain is U3-lycotoxin-Ls1u from Lycosa singoriensis (Wolf spider).